The following is a 124-amino-acid chain: Fluoride-specific ion channel FluC (124 aa).

A run of 4 helical transmembrane segments spans residues 1–21 (MLNT…RYGV), 36–56 (TMII…WFVV), 70–90 (TGIL…FLLI), and 100–120 (LYVI…FAII). Residues glycine 74 and threonine 77 each coordinate Na(+).

This sequence belongs to the fluoride channel Fluc/FEX (TC 1.A.43) family.

The protein resides in the cell inner membrane. The catalysed reaction is fluoride(in) = fluoride(out). Its activity is regulated as follows. Na(+) is not transported, but it plays an essential structural role and its presence is essential for fluoride channel function. Fluoride-specific ion channel. Important for reducing fluoride concentration in the cell, thus reducing its toxicity. The polypeptide is Fluoride-specific ion channel FluC (Methylobacterium sp. (strain 4-46)).